Consider the following 1678-residue polypeptide: Serine/threonine-protein kinase pakD (1678 aa).

Positions 1–15 are enriched in low complexity; sequence MSRLQPQQQQRGRSS. Disordered regions lie at residues 1–73, 180–224, 262–428, and 442–489; these read MSRL…NNKF, NSNS…PNKN, QLSS…NNNN, and KRKS…SQSS. The segment covering 17–34 has biased composition (polar residues); that stretch reads FKDNFQIQKPLQSLTPSE. Low complexity-rich tracts occupy residues 35 to 73 and 180 to 214; these read QQQQ…NNKF and NSNS…NNNN. The Calponin-homology (CH) domain maps to 82–189; sequence KNVENDIKKW…NSNSSKTTTN (108 aa). The segment covering 215-224 has biased composition (polar residues); sequence RAIITSPNKN. Low complexity-rich tracts occupy residues 276 to 359 and 399 to 428; these read NNNN…NINN and NNNN…NNNN. The segment covering 460-472 has biased composition (acidic residues); it reads DSSDSSDSSDSDS. Coiled coils occupy residues 512 to 542 and 570 to 628; these read KQDK…KKLL and TRQI…YANT. 3 stretches are compositionally biased toward low complexity: residues 631 to 654, 662 to 671, and 695 to 713; these read SSNS…INGS, NSSTSKGTLS, and NSHQ…QTTS. Disordered regions lie at residues 631–672 and 693–722; these read SSNS…TLSR and PVNS…ASYN. A coiled-coil region spans residues 752–862; it reads VSATLQQKQQ…QNQQINNLID (111 aa). The Phorbol-ester/DAG-type zinc finger occupies 1141–1197; that stretch reads PHSFVLKSFRIISECNYCRQYIWGVRGIVAREAFECVGCKYKTHKKCLKEASEKTFC. Positions 1202–1215 constitute a CRIB domain; sequence VGAPFNVKHEMHVG. Disordered regions lie at residues 1267-1292 and 1323-1346; these read LTNN…QQNQ and NNTY…PNNN. Residues 1269–1309 are a coiled coil; sequence NNSNNNNNNNNSNNNLQQQQQQNQQLKQKLNITNNQQNNTI. The Protein kinase domain occupies 1376–1647; that stretch reads YKVREVVGGG…AHYLLRHPFL (272 aa). Residues 1382–1390 and K1405 each bind ATP; that span reads VGGGSTGKV. The active-site Proton acceptor is the D1515.

It belongs to the protein kinase superfamily. STE Ser/Thr protein kinase family. STE20 subfamily. Mg(2+) is required as a cofactor.

It catalyses the reaction L-seryl-[protein] + ATP = O-phospho-L-seryl-[protein] + ADP + H(+). The enzyme catalyses L-threonyl-[protein] + ATP = O-phospho-L-threonyl-[protein] + ADP + H(+). The polypeptide is Serine/threonine-protein kinase pakD (Dictyostelium discoideum (Social amoeba)).